Consider the following 244-residue polypeptide: 7-cyano-7-deazaguanine synthase (244 aa).

Residue 14–24 (FSGGQDSATCV) coordinates ATP. Residues Cys-202, Cys-217, Cys-220, and Cys-223 each contribute to the Zn(2+) site.

Belongs to the QueC family. Requires Zn(2+) as cofactor.

The catalysed reaction is 7-carboxy-7-deazaguanine + NH4(+) + ATP = 7-cyano-7-deazaguanine + ADP + phosphate + H2O + H(+). Its pathway is purine metabolism; 7-cyano-7-deazaguanine biosynthesis. In terms of biological role, catalyzes the ATP-dependent conversion of 7-carboxy-7-deazaguanine (CDG) to 7-cyano-7-deazaguanine (preQ(0)). The sequence is that of 7-cyano-7-deazaguanine synthase from Burkholderia ambifaria (strain MC40-6).